We begin with the raw amino-acid sequence, 792 residues long: DNA ligase (792 aa).

NAD(+) is bound by residues 42 to 46, 91 to 92, and Glu124; these read DAEYD and SL. Catalysis depends on Lys126, which acts as the N6-AMP-lysine intermediate. NAD(+) is bound by residues Arg147, Glu189, Lys306, and Lys330. Zn(2+)-binding residues include Cys424, Cys426, Cys448, and Cys454. Residues 714 to 792 enclose the BRCT domain; the sequence is KTDTAVAGKT…EDEWLAMVGG (79 aa).

Belongs to the NAD-dependent DNA ligase family. LigA subfamily. Mg(2+) is required as a cofactor. The cofactor is Mn(2+).

The catalysed reaction is NAD(+) + (deoxyribonucleotide)n-3'-hydroxyl + 5'-phospho-(deoxyribonucleotide)m = (deoxyribonucleotide)n+m + AMP + beta-nicotinamide D-nucleotide.. In terms of biological role, DNA ligase that catalyzes the formation of phosphodiester linkages between 5'-phosphoryl and 3'-hydroxyl groups in double-stranded DNA using NAD as a coenzyme and as the energy source for the reaction. It is essential for DNA replication and repair of damaged DNA. The sequence is that of DNA ligase from Caulobacter sp. (strain K31).